The primary structure comprises 76 residues: Small ribosomal subunit protein eS17 (76 aa).

It belongs to the eukaryotic ribosomal protein eS17 family.

This chain is Small ribosomal subunit protein eS17, found in Picrophilus torridus (strain ATCC 700027 / DSM 9790 / JCM 10055 / NBRC 100828 / KAW 2/3).